We begin with the raw amino-acid sequence, 418 residues long: Aminodeoxyfutalosine deaminase (418 aa).

Residues histidine 97 and histidine 99 each contribute to the Zn(2+) site. Glutamate 173 and histidine 211 together coordinate substrate. Residue histidine 238 participates in Zn(2+) binding. Residue glutamate 241 is the Proton donor of the active site. Aspartate 352 contacts Zn(2+).

The protein belongs to the metallo-dependent hydrolases superfamily. The cofactor is Zn(2+).

The enzyme catalyses 6-amino-6-deoxyfutalosine + H2O + H(+) = futalosine + NH4(+). It participates in quinol/quinone metabolism; menaquinone biosynthesis. In terms of biological role, catalyzes the deamination of aminodeoxyfutalosine (AFL) into futalosine (FL). To a lesser extent, can also deaminate 5'-deoxyadenosine, 5'-methylthioadenosine, 2'-deoxyadenosine, adenosine, 1-(6-amino-9H-purin-9-yl)-1-deoxy-N-ethyl-beta-D-ribofuranuronamide (NECA), and S-adenosylhomocysteine. The polypeptide is Aminodeoxyfutalosine deaminase (Deinococcus radiodurans (strain ATCC 13939 / DSM 20539 / JCM 16871 / CCUG 27074 / LMG 4051 / NBRC 15346 / NCIMB 9279 / VKM B-1422 / R1)).